Reading from the N-terminus, the 466-residue chain is Putative transcription factor bHLH041 (466 aa).

Disordered stretches follow at residues 108-129 (PANS…SLSP), 194-213 (LTGP…KGRA), and 260-289 (RENA…TQLQ). Residues 120–129 (PSSSSSSLSP) are compositionally biased toward low complexity. Gly residues predominate over residues 268 to 279 (EGSGGSGGGGRY). Residues 285 to 334 (ATQLQHMISERKRREKLNESFQALRSLLPPGTKKDKASVLSIAREQLSSL) enclose the bHLH domain.

In terms of assembly, homodimer.

The protein resides in the nucleus. The sequence is that of Putative transcription factor bHLH041 (BHLH41) from Arabidopsis thaliana (Mouse-ear cress).